Here is a 295-residue protein sequence, read N- to C-terminus: Foldase protein PrsA (295 aa).

Residues 1 to 19 form the signal peptide; sequence MKKVLIGFASIAMAFTLAA. A lipid anchor (N-palmitoyl cysteine) is attached at Cys-20. A lipid anchor (S-diacylglycerol cysteine) is attached at Cys-20. One can recognise a PpiC domain in the interval 136 to 229; it reads EPKVTVAQIL…YGYQVIKMIN (94 aa).

This sequence belongs to the PrsA family.

It is found in the cell membrane. It carries out the reaction [protein]-peptidylproline (omega=180) = [protein]-peptidylproline (omega=0). Plays a major role in protein secretion by helping the post-translocational extracellular folding of several secreted proteins. The polypeptide is Foldase protein PrsA (Pediococcus pentosaceus (strain ATCC 25745 / CCUG 21536 / LMG 10740 / 183-1w)).